Reading from the N-terminus, the 428-residue chain is Enolase (428 aa).

(2R)-2-phosphoglycerate is bound at residue Gln163. Glu205 acts as the Proton donor in catalysis. Mg(2+) is bound by residues Asp242, Glu286, and Asp313. The (2R)-2-phosphoglycerate site is built by Lys338, Arg367, Ser368, and Lys389. Residue Lys338 is the Proton acceptor of the active site.

It belongs to the enolase family. The cofactor is Mg(2+).

Its subcellular location is the cytoplasm. It localises to the secreted. It is found in the cell surface. It catalyses the reaction (2R)-2-phosphoglycerate = phosphoenolpyruvate + H2O. Its pathway is carbohydrate degradation; glycolysis; pyruvate from D-glyceraldehyde 3-phosphate: step 4/5. Its function is as follows. Catalyzes the reversible conversion of 2-phosphoglycerate (2-PG) into phosphoenolpyruvate (PEP). It is essential for the degradation of carbohydrates via glycolysis. The protein is Enolase of Bordetella bronchiseptica (strain ATCC BAA-588 / NCTC 13252 / RB50) (Alcaligenes bronchisepticus).